We begin with the raw amino-acid sequence, 444 residues long: C4-dicarboxylate transport protein 2 (444 aa).

6 helical membrane-spanning segments follow: residues 23-43 (ILYV…WLWP), 61-81 (LIKM…IAHI), 95-115 (LVYF…VANV), 162-182 (GEIL…MGLG), 198-218 (AMFG…FGAM), and 236-256 (LIAT…GIIA).

This sequence belongs to the dicarboxylate/amino acid:cation symporter (DAACS) (TC 2.A.23) family.

It is found in the cell inner membrane. In terms of biological role, responsible for the transport of dicarboxylates such as succinate, fumarate, and malate from the periplasm across the membrane. The sequence is that of C4-dicarboxylate transport protein 2 from Bradyrhizobium diazoefficiens (strain JCM 10833 / BCRC 13528 / IAM 13628 / NBRC 14792 / USDA 110).